A 208-amino-acid chain; its full sequence is MELKVLNTAGAETGEVVTLRDDIFGAEVSEHAIWLDVKSILANKRQGTHKSKTRAEVRGGGRKPYRQKGTGNARQGSTRSPLMIGGGTIFGPTPHGYDQKVNRKVKQLARRSAFSAKAQEGRILIVEDFALAEIKTKPVADMLRNLGLDAKKILMLTPDYNMVIARSGRNIEALNIMTAEKASTYDILNSHTVLFQKTALKKLEETLG.

The disordered stretch occupies residues 45 to 83 (RQGTHKSKTRAEVRGGGRKPYRQKGTGNARQGSTRSPLM). The span at 69 to 80 (GTGNARQGSTRS) shows a compositional bias: polar residues.

The protein belongs to the universal ribosomal protein uL4 family. As to quaternary structure, part of the 50S ribosomal subunit.

Functionally, one of the primary rRNA binding proteins, this protein initially binds near the 5'-end of the 23S rRNA. It is important during the early stages of 50S assembly. It makes multiple contacts with different domains of the 23S rRNA in the assembled 50S subunit and ribosome. Forms part of the polypeptide exit tunnel. The polypeptide is Large ribosomal subunit protein uL4 (Chlorobium luteolum (strain DSM 273 / BCRC 81028 / 2530) (Pelodictyon luteolum)).